A 1630-amino-acid polypeptide reads, in one-letter code: Separin (1630 aa).

The disordered stretch occupies residues 1016–1037 (SKHSTGLKLCDSPRSSSMTPRG). The 100-residue stretch at 1443–1542 (EDNISMILNP…SAAMKYYGKL (100 aa)) folds into the Peptidase C50 domain. Cysteine 1531 is an active-site residue.

As to quaternary structure, may bind calcium. Interacts with PDS1. Interacts with MCD1.

It is found in the nucleus. It localises to the cytoplasm. The protein localises to the cytoskeleton. The protein resides in the microtubule organizing center. Its subcellular location is the spindle pole body. The catalysed reaction is All bonds known to be hydrolyzed by this endopeptidase have arginine in P1 and an acidic residue in P4. P6 is often occupied by an acidic residue or by a hydroxy-amino-acid residue, the phosphorylation of which enhances cleavage.. Its activity is regulated as follows. It is inactivated via its interaction with PDS1, which probably covers its active site. PDS1 degradation at anaphase, liberates it and triggers MCD1 cleavage. Its function is as follows. Caspase-like protease, which plays a central role in the chromosome segregation by cleaving the MCD1/SCC1 subunit of the cohesin complex at the onset of anaphase. During most of the cell cycle, it is inactivated by securin/PDS1 protein. It also promotes anaphase spindle elongation. A component of the FEAR (CDC14 early anaphase release) network which promotes CDC14 release from the nucleolus during early anaphase. Cleaves SLK19. The protein is Separin (ESP1) of Saccharomyces cerevisiae (strain ATCC 204508 / S288c) (Baker's yeast).